A 276-amino-acid polypeptide reads, in one-letter code: Undecaprenyl-diphosphatase 1 (276 aa).

5 helical membrane-spanning segments follow: residues 85–105 (MNVV…EKTI), 108–128 (VLFA…VILW), 187–207 (VATE…TLYE), 217–237 (VDSI…AFAC), and 253–273 (FAWY…SGWI).

Belongs to the UppP family.

It is found in the cell inner membrane. The catalysed reaction is di-trans,octa-cis-undecaprenyl diphosphate + H2O = di-trans,octa-cis-undecaprenyl phosphate + phosphate + H(+). In terms of biological role, catalyzes the dephosphorylation of undecaprenyl diphosphate (UPP). Confers resistance to bacitracin. The protein is Undecaprenyl-diphosphatase 1 of Burkholderia thailandensis (strain ATCC 700388 / DSM 13276 / CCUG 48851 / CIP 106301 / E264).